The following is a 199-amino-acid chain: Potassium-transporting ATPase KdpC subunit (199 aa).

The chain crosses the membrane as a helical span at residues 21-43 (LALLFVCGVVYTGTVTQLGGALF).

It belongs to the KdpC family. In terms of assembly, the system is composed of three essential subunits: KdpA, KdpB and KdpC.

It localises to the cell inner membrane. Functionally, part of the high-affinity ATP-driven potassium transport (or Kdp) system, which catalyzes the hydrolysis of ATP coupled with the electrogenic transport of potassium into the cytoplasm. This subunit acts as a catalytic chaperone that increases the ATP-binding affinity of the ATP-hydrolyzing subunit KdpB by the formation of a transient KdpB/KdpC/ATP ternary complex. This is Potassium-transporting ATPase KdpC subunit from Shewanella putrefaciens (strain CN-32 / ATCC BAA-453).